A 63-amino-acid polypeptide reads, in one-letter code: Large ribosomal subunit protein bL35 (63 aa).

Over residues 1–43 (MKMRTHSGAKKRLKVLSSGKVKKKSTRMRHLNSHMSSKTKRQL) the composition is skewed to basic residues. The disordered stretch occupies residues 1 to 45 (MKMRTHSGAKKRLKVLSSGKVKKKSTRMRHLNSHMSSKTKRQLGK).

This sequence belongs to the bacterial ribosomal protein bL35 family.

In Bdellovibrio bacteriovorus (strain ATCC 15356 / DSM 50701 / NCIMB 9529 / HD100), this protein is Large ribosomal subunit protein bL35.